We begin with the raw amino-acid sequence, 244 residues long: MQGNEQQAYDRGITIFSPDGRLYQVEYAREAVKRGTASVGVRTEDGVVIAADRHARSPLIERDSIEKIHEIDSHVGVASAGHVADARQLIDVARRQSQVNRLRYDEPASVESLTKEITDYIQQYTQTGGARPFGVALLVAGIEDGEPRLFETDPSGTPYEWQAVAIGGSREDIQTFLEEEYAEGMDLEGGIELALRALASVNEDGLDATGVDIATIDVESEQFEKLAEDDIAERLEEFELGGEE.

The protein belongs to the peptidase T1A family. In terms of assembly, the 20S proteasome core is composed of 14 alpha and 14 beta subunits that assemble into four stacked heptameric rings, resulting in a barrel-shaped structure. The two inner rings, each composed of seven catalytic beta subunits, are sandwiched by two outer rings, each composed of seven alpha subunits. The catalytic chamber with the active sites is on the inside of the barrel. Has a gated structure, the ends of the cylinder being occluded by the N-termini of the alpha-subunits. Is capped at one or both ends by the proteasome regulatory ATPase, PAN.

Its subcellular location is the cytoplasm. The formation of the proteasomal ATPase PAN-20S proteasome complex, via the docking of the C-termini of PAN into the intersubunit pockets in the alpha-rings, triggers opening of the gate for substrate entry. Interconversion between the open-gate and close-gate conformations leads to a dynamic regulation of the 20S proteasome proteolysis activity. In terms of biological role, component of the proteasome core, a large protease complex with broad specificity involved in protein degradation. The polypeptide is Proteasome subunit alpha 2 (Haloarcula marismortui (strain ATCC 43049 / DSM 3752 / JCM 8966 / VKM B-1809) (Halobacterium marismortui)).